Consider the following 568-residue polypeptide: Methyl-accepting chemotaxis protein CtpH (568 aa).

Residues 1–39 lie on the Cytoplasmic side of the membrane; that stretch reads MPASPGHRDVLGCLVAACVPVQPGNPSRRSMLQQSLRAQ. Residues 40 to 60 traverse the membrane as a helical segment; that stretch reads ILVLLGGSLAALLLIALACFG. At 61–216 the chain is on the periplasmic side; that stretch reads SLTGDVRAYR…ISAEARRTML (156 aa). Residues 217-237 form a helical membrane-spanning segment; that stretch reads LGSLVLIGASLAVALLSLWLV. Topologically, residues 238 to 568 are cytoplasmic; it reads NRNLVRPVQR…LGDALQRLRA (331 aa). The HAMP domain maps to 239–291; the sequence is RNLVRPVQRLIEHIAQLSHGDFGERIEIRRKDELGKLALAANTLRDFLVDIFD. One can recognise a Methyl-accepting transducer domain in the interval 296–532; sequence STRDLDSASG…EISRNLTEIA (237 aa).

This sequence belongs to the methyl-accepting chemotaxis (MCP) protein family.

The protein localises to the cell inner membrane. Functionally, chemotactic-signal transducers respond to changes in the concentration of attractants and repellents in the environment, transduce a signal from the outside to the inside of the cell, and facilitate sensory adaptation through the variation of the level of methylation. Chemoreceptor for inorganic phosphate, which is required for taxis at high concentrations of phosphate. Recognizes inorganic phosphate directly. Can also bind to other components that have a pyrophosphate group, including ATP and ADP. This chain is Methyl-accepting chemotaxis protein CtpH, found in Pseudomonas aeruginosa (strain ATCC 15692 / DSM 22644 / CIP 104116 / JCM 14847 / LMG 12228 / 1C / PRS 101 / PAO1).